The following is a 273-amino-acid chain: Putative phosphoenolpyruvate synthase regulatory protein (273 aa).

G153–T160 is an ADP binding site.

It belongs to the pyruvate, phosphate/water dikinase regulatory protein family. PSRP subfamily.

The enzyme catalyses [pyruvate, water dikinase] + ADP = [pyruvate, water dikinase]-phosphate + AMP + H(+). It carries out the reaction [pyruvate, water dikinase]-phosphate + phosphate + H(+) = [pyruvate, water dikinase] + diphosphate. In terms of biological role, bifunctional serine/threonine kinase and phosphorylase involved in the regulation of the phosphoenolpyruvate synthase (PEPS) by catalyzing its phosphorylation/dephosphorylation. This is Putative phosphoenolpyruvate synthase regulatory protein from Leptothrix cholodnii (strain ATCC 51168 / LMG 8142 / SP-6) (Leptothrix discophora (strain SP-6)).